We begin with the raw amino-acid sequence, 50 residues long: Defensin-like protein 1 (50 aa).

4 disulfides stabilise this stretch: C3/C50, C14/C35, C20/C44, and C24/C46.

The protein belongs to the DEFL family.

The protein localises to the secreted. Its function is as follows. Possesses antimicrobial activity sensitive to inorganic cations. Has no inhibitory effect on insect gut alpha-amylase. Induces potential changes in fungal membranes and increased K+ efflux and Ca(2+) uptake. Interacts with sphingolipids and ergosterols found in fungal plasma membranes. The chain is Defensin-like protein 1 from Dahlia merckii (Bedding dahlia).